The sequence spans 269 residues: MGRSRSRSSSRSKHSKTSKHSKKRSRSRSRSRDRERKRRSKSRESKRNRRRESRSRSRSNTATSRRDRERAASPPERIDIFGRALSKRSAVDEKQKKEEEEKKVEMERQRRIRQQEIEERLIEEETARRVEELVAKRVEEELEKRKDEIEREVLRRVEEAKRIMEKQLLEELERQRHAELAAQKAREEEEKSKREELEKILVDNNRKIADAQAKLAEDQLRIVEEQRKIHEERMKLEQERQKQQKEEQKMILGKGKSRPKLSFSLKASE.

The span at 1–57 (MGRSRSRSSSRSKHSKTSKHSKKRSRSRSRSRDRERKRRSKSRESKRNRRRESRSRS) shows a compositional bias: basic residues. The tract at residues 1–70 (MGRSRSRSSS…TATSRRDRER (70 aa)) is necessary and sufficient for RNA binding. Disordered regions lie at residues 1-109 (MGRS…MERQ) and 233-269 (RMKL…KASE). Composition is skewed to basic and acidic residues over residues 64–80 (SRRD…RIDI), 89–109 (SAVD…MERQ), and 233–249 (RMKL…EEQK). The segment at 71–269 (AASPPERIDI…KLSFSLKASE (199 aa)) is necessary and sufficient for transcriptional regulation.

It belongs to the ARGLU1 family.

It localises to the nucleus. The protein resides in the nucleus speckle. It is found in the chromosome. Dual function regulator of gene expression; regulator of transcription and modulator of alternative splicing. General coactivator of nuclear receptor-induced gene expression. This is Arginine and glutamate-rich protein 1-B (arglu1b) from Danio rerio (Zebrafish).